A 601-amino-acid polypeptide reads, in one-letter code: MVLTSSYSVEGKPASLGPWGGQSGHAWDDGMYTTVKQIIIAHGSGIDSIQIEYDKNGSSVWSEKRGGKGGKKFDKVKFDYPHEYLISVNGTYGSFDVWGTICVRSLTFESNRRKYGPFGVDSGTFFALPKSGSKIIGFHGKAGWYLDAIGVHTQPIPKENNPSSKILLHSHQSFSQGDKKHEYSVLQGSVGQNFDIVVTLRKKDPTLPSFESRDSAGAEVTKHKLVTDTEKSQSKIEGGAKTYGPWGGTGGIMFDDGIYTGIRQINLSRNVGIVSMKVCYDFRGQAVWGSKHGGVGGFKHDKIVFDYPSEVLTHVTGTYGPLMYMGPNVIKSLTFRTNRGKHGPYGEEQGPSFTHQMDEGKVVGFLGREGLFLDSIGVHVMECKISSLKPSSPHNAIVPHNNSGTAQIENSPWANKLVLAANGHGEEVDRGVVKEPTPSGPGPWGGDGGQAWDDGVFSGIKQIFVTRGNDAITSIQIEYDRNGQSVWSIKHGGDSNGVATHRIKFEYPDESITCISGYYGPLNNSDRYNVVKSLSFYTSRGRYGPYGEETGTFFTSTTTQGKVLGFHGRSSFHLDAIGVHMQHWLGNNKSYYSRASCFKLF.

3 consecutive Jacalin-type lectin domains span residues proline 13–proline 155, alanine 240–glutamate 382, and proline 438–histidine 583.

Belongs to the jacalin lectin family.

The protein is Jacalin-related lectin 3 (JAL3) of Arabidopsis thaliana (Mouse-ear cress).